A 285-amino-acid polypeptide reads, in one-letter code: Aldo-keto reductase (285 aa).

165–175 (APLAGGILTGK) lines the NADP(+) pocket.

The protein belongs to the aldo/keto reductase family. Aldo/keto reductase 2 subfamily.

This chain is Aldo-keto reductase, found in Babesia bovis.